The following is a 127-amino-acid chain: Protein ApaG (127 aa).

The 125-residue stretch at 3–127 (NDQKYDIKVQ…FILSVPRVLH (125 aa)) folds into the ApaG domain.

This Nitrosomonas eutropha (strain DSM 101675 / C91 / Nm57) protein is Protein ApaG.